Here is a 1088-residue protein sequence, read N- to C-terminus: DNA damage-binding protein 1a (1088 aa).

It belongs to the DDB1 family. Component of the CDD complex, at least composed of COP10, DET1 and DDB1A. Component of the CUL4-RBX1-CDD complex. Component of the CUL4-RBX1-DDB1-PRL1 E3 ubiquitin-protein ligase complex. Component of the UV-DDB complex, which is composed of DDB1A and DDB2. Interacts with RAE1. Interacts with WDR55. Interacts with ATCSA-1. Interacts with DDA1. Binds to ASG2; the subcellular localization of this complex depends on ASG2 farnesylation status. Binds to KTN80.2/DWA3. Interacts with HTD1. Interacts directly with DHU1.

Its subcellular location is the cytoplasm. The protein resides in the nucleus. It participates in protein modification; protein ubiquitination. In terms of biological role, component of light signal transduction machinery. Involved in repression of photomorphogenesis in darkness by participating in the CDD complex, a complex probably required to regulate the activity of ubiquitin conjugating enzymes (E2s). Repression of photomorphogenesis is probably mediated by ubiquitination and subsequent degradation of photomorphogenesis-promoting factors such as HY5, HYH and LAF1. Plays a role in DNA repair by forming with DDB2 the UV-damaged DNA-binding protein complex (UV-DDB). Component of the CUL4-RBX1-DDB1-PRL1 E3 ubiquitin-protein ligase complex. This Arabidopsis thaliana (Mouse-ear cress) protein is DNA damage-binding protein 1a.